Here is a 270-residue protein sequence, read N- to C-terminus: Aquaporin-11 (270 aa).

2 helical membrane-spanning segments follow: residues 5 to 25 (IMTM…ISIC) and 59 to 79 (FELG…GLFF). The short motif at 94–96 (DPS) is the NPA 1 element. The chain crosses the membrane as a helical span at residues 120–140 (IMGAAVSYRFAKIFWSFGLMA). N-linked (GlcNAc...) asparagine glycosylation occurs at asparagine 148. 2 helical membrane passes run 153–173 (ASLQ…TIVN) and 184–204 (MLIS…VSGG). Residues 207–209 (NPT) carry the NPA 2 motif. The chain crosses the membrane as a helical span at residues 220–240 (GLSGPSFFLVYWFGPILGSSI).

This sequence belongs to the MIP/aquaporin (TC 1.A.8) family.

The protein localises to the membrane. The enzyme catalyses H2O(in) = H2O(out). In terms of biological role, probable intracellular unorthodox aquaporin that may modulate the water content and osmolytes during anhydrobiosis. The sequence is that of Aquaporin-11 from Milnesium tardigradum (Water bear).